The following is a 383-amino-acid chain: Probable sphingolipid long chain base-responsive protein pil2 (383 aa).

Serine 162 is subject to Phosphoserine. Disordered regions lie at residues proline 292–glutamine 336 and glycine 356–alanine 383. Residues threonine 311–serine 324 are compositionally biased toward low complexity. 2 stretches are compositionally biased toward polar residues: residues lysine 325 to glutamine 336 and valine 368 to alanine 383.

In terms of processing, phosphorylated by ksg1 and ppk21. Phosphorylation is regulated by sphingolipid long chain bases (LCBs).

In terms of biological role, negative regulator of cell wall integrity (CWI) in unstressed cells, probably by inhibiting protein kinase ksg1/ppk21 activity and regulating their downstream CWI pathways pck2-MAP kinase pathway and protein kinase gad8 pathway. Activity may be regulated by the transient increase of sphingolipid long chain bases (LCBs) during heat stress. This is Probable sphingolipid long chain base-responsive protein pil2 (pil2) from Schizosaccharomyces pombe (strain 972 / ATCC 24843) (Fission yeast).